A 362-amino-acid chain; its full sequence is Solute carrier family 25 member 3 (362 aa).

The transit peptide at 1–49 (MYSSVVHLARANPFNAPHLQLVHDGLAGPRSDPAGPPGPPRRSRNLAAA) directs the protein to the mitochondrion. Topologically, residues 50 to 63 (AVEEQYSCDYGSGR) are mitochondrial intermembrane. 3 Solcar repeats span residues 63 to 147 (RFFI…FKVL), 160 to 244 (WRTS…TVEA), and 261 to 339 (EQLV…VKVY). The chain crosses the membrane as a helical span at residues 64-86 (FFILCGLGGIISCGTTHTALVPL). The Mitochondrial matrix segment spans residues 87-121 (DLVKCRMQVDPQKYKSIFNGFSVTLKEDGFRGLAK). Residue Lys99 is modified to N6-acetyllysine. Lys112 carries the post-translational modification N6-methyllysine. Residues 122–141 (GWAPTFIGYSLQGLCKFGFY) form a helical membrane-spanning segment. The Mitochondrial intermembrane segment spans residues 142–161 (EVFKVLYSNMLGEENAYLWR). Residues 162–183 (TSLYLAASASAEFFADIALAPM) traverse the membrane as a helical segment. Over 184 to 218 (EAAKVRIQTQPGYANTLRDAAPKMYKEEGLKAFYK) the chain is Mitochondrial matrix. Tyr196 is modified (phosphotyrosine). Lys209 is modified (N6-acetyllysine). A helical transmembrane segment spans residues 219–238 (GVAPLWMRQIPYTMMKFACF). The Mitochondrial intermembrane portion of the chain corresponds to 239-261 (ERTVEALYKFVVPKPRSECSKPE). A helical transmembrane segment spans residues 262-284 (QLVVTFVAGYIAGVFCAIVSHPA). The Mitochondrial matrix portion of the chain corresponds to 285–314 (DSVVSVLNKEKGSSASEVLKRLGFRGVWKG). A helical transmembrane segment spans residues 315 to 333 (LFARIIMIGTLTALQWFIY). Residues 334–362 (DSVKVYFRLPRPPPPEMPESLKKKLGYTQ) are Mitochondrial intermembrane-facing.

The protein belongs to the mitochondrial carrier (TC 2.A.29) family. As to quaternary structure, interacts with PPIF; the interaction is impaired by CsA. In terms of tissue distribution, expressed in heart, diaphragm and skeletal muscle (at protein level). Not detected in liver, lung, brain, and kidney (at protein level). As to expression, ubiquitous (at protein level).

It localises to the mitochondrion inner membrane. The enzyme catalyses phosphate(in) + H(+)(in) = phosphate(out) + H(+)(out). Up-regulated in the presence of cardiolipin. In terms of biological role, inorganic ion transporter that transports phosphate or copper ions across the mitochondrial inner membrane into the matrix compartment. Mediates proton-coupled symport of phosphate ions necessary for mitochondrial oxidative phosphorylation of ADP to ATP. Transports copper ions probably in the form of anionic copper(I) complexes to maintain mitochondrial matrix copper pool and to supply copper for cytochrome C oxidase complex assembly. May also play a role in regulation of the mitochondrial permeability transition pore (mPTP). The polypeptide is Solute carrier family 25 member 3 (Bos taurus (Bovine)).